Consider the following 419-residue polypeptide: Tryptophan synthase beta chain (419 aa).

Lysine 113 carries the post-translational modification N6-(pyridoxal phosphate)lysine.

The protein belongs to the TrpB family. Tetramer of two alpha and two beta chains. Requires pyridoxal 5'-phosphate as cofactor.

The enzyme catalyses (1S,2R)-1-C-(indol-3-yl)glycerol 3-phosphate + L-serine = D-glyceraldehyde 3-phosphate + L-tryptophan + H2O. The protein operates within amino-acid biosynthesis; L-tryptophan biosynthesis; L-tryptophan from chorismate: step 5/5. Its function is as follows. The beta subunit is responsible for the synthesis of L-tryptophan from indole and L-serine. In Picrophilus torridus (strain ATCC 700027 / DSM 9790 / JCM 10055 / NBRC 100828 / KAW 2/3), this protein is Tryptophan synthase beta chain.